Consider the following 187-residue polypeptide: dCTP deaminase, dUMP-forming (187 aa).

DCTP is bound by residues 101-106 (KSSLGR) and D119. Catalysis depends on E129, which acts as the Proton donor/acceptor. DCTP contacts are provided by Q148, Y162, and Q174.

The protein belongs to the dCTP deaminase family. In terms of assembly, homotrimer.

The enzyme catalyses dCTP + 2 H2O = dUMP + NH4(+) + diphosphate. The protein operates within pyrimidine metabolism; dUMP biosynthesis; dUMP from dCTP: step 1/1. Its function is as follows. Bifunctional enzyme that catalyzes both the deamination of dCTP to dUTP and the hydrolysis of dUTP to dUMP without releasing the toxic dUTP intermediate. The chain is dCTP deaminase, dUMP-forming from Corynebacterium kroppenstedtii (strain DSM 44385 / JCM 11950 / CIP 105744 / CCUG 35717).